Consider the following 264-residue polypeptide: 3-methyl-2-oxobutanoate hydroxymethyltransferase (264 aa).

The Mg(2+) site is built by Asp45 and Asp84. 3-methyl-2-oxobutanoate contacts are provided by residues 45-46 (DS), Asp84, and Lys112. Residue Glu114 coordinates Mg(2+). The active-site Proton acceptor is the Glu181.

The protein belongs to the PanB family. As to quaternary structure, homodecamer; pentamer of dimers. Mg(2+) serves as cofactor.

The protein localises to the cytoplasm. It carries out the reaction 3-methyl-2-oxobutanoate + (6R)-5,10-methylene-5,6,7,8-tetrahydrofolate + H2O = 2-dehydropantoate + (6S)-5,6,7,8-tetrahydrofolate. It functions in the pathway cofactor biosynthesis; (R)-pantothenate biosynthesis; (R)-pantoate from 3-methyl-2-oxobutanoate: step 1/2. In terms of biological role, catalyzes the reversible reaction in which hydroxymethyl group from 5,10-methylenetetrahydrofolate is transferred onto alpha-ketoisovalerate to form ketopantoate. The chain is 3-methyl-2-oxobutanoate hydroxymethyltransferase from Shewanella loihica (strain ATCC BAA-1088 / PV-4).